Consider the following 37-residue polypeptide: Alpha-conotoxin LvIA (37 aa).

A propeptide spanning residues 1–20 (FRGRDAAAKASGLVGLTDRR) is cleaved from the precursor. Cystine bridges form between Cys-22–Cys-28 and Cys-23–Cys-36. The segment at 24–26 (SHP) is ser-Xaa-Pro motif, crucial for potent interaction with nAChR. Cys-36 carries the post-translational modification Cysteine amide.

The protein belongs to the conotoxin A superfamily. In terms of tissue distribution, expressed by the venom duct.

It is found in the secreted. Functionally, alpha-conotoxins act on postsynaptic membranes, they bind to the nicotinic acetylcholine receptors (nAChR) and thus inhibit them. This toxin blocks alpha-3-beta-2/CHRNA3-CHRNB2 nAChR with high selectivity (IC(50)=8.67 nM (on rat) and 17.5 (on human)). Also has weaker activity on alpha-6/alpha-3-beta-2-beta-3 (CHRNA6/CHRNA3-CHRNB2-CHRNB3) (IC(50)=108 nM (on rat)), alpha-6/alpha-3-beta-4 (CHRNA6/CHRNA3-CHRNB4) (IC(50)=121 nM (on rat)), alpha-3-beta-4 (CHRNA3-CHRNB4) (IC(50)=148 nM (on rat)), and alpha-7/CHRNA7 nAChRs (IC(50)=3000 nM (on rat)). When tested on mouse with hot-plate tests, this toxin significantly increases the base pain threshold and shows analgesic effects. The polypeptide is Alpha-conotoxin LvIA (Conus lividus (Livid cone)).